We begin with the raw amino-acid sequence, 82 residues long: RNA-binding protein TTE2299 (82 aa).

This sequence belongs to the eukaryotic ribosomal protein eL8 family.

The protein is RNA-binding protein TTE2299 of Caldanaerobacter subterraneus subsp. tengcongensis (strain DSM 15242 / JCM 11007 / NBRC 100824 / MB4) (Thermoanaerobacter tengcongensis).